The sequence spans 175 residues: Pycsar effector protein RsPycTM (175 aa).

3 helical membrane passes run 17–37 (AKNA…ITLL), 44–64 (PLGF…AAII), and 146–166 (AGSL…LFCI).

It is found in the cell inner membrane. Functionally, pycsar (pyrimidine cyclase system for antiphage resistance) provides immunity against bacteriophage. The pyrimidine cyclase (PycC) synthesizes cyclic nucleotides in response to infection; these serve as specific second messenger signals. The signals activate the nearby effector, leading to bacterial cell death and abortive phage infection. A clade A Pycsar system. The effector gene of a two-gene Pycsar system. Expression of this and uridylate cyclase RsPycC (AC A0A4R2TZQ0) probably confers resistance to bacteriophage. The genes are probably only expressed in response to bacteriophage infection. Probably only responds to cUMP (produced by its cognate NTP cyclase), acts by impairing membrane integrity. This is Pycsar effector protein RsPycTM from Rhizobium sp. (strain PP-F2F-G36).